The following is an 860-amino-acid chain: Spindle and centriole-associated protein 1 (860 aa).

Disordered regions lie at residues 160–200 (ESVI…SQSN), 232–254 (QSQM…QKAA), and 293–330 (KQLL…SSSN). Thr-236 is subject to Phosphothreonine. Residues 236-249 (TASSGTPSSASPSG) are compositionally biased toward low complexity. Over residues 308–330 (PSKQKSSMLSASTASTDLPSSSN) the composition is skewed to polar residues. The stretch at 383 to 437 (RYLKESELQLRKEVETRQRLEEALGDHRELIDALTAEVLFLREENTATQARLQQY) forms a coiled coil. Ser-646 is subject to Phosphoserine. Residues 729–755 (SSMEERIAELNRQSMEARGKLLQLIEQ) adopt a coiled-coil conformation. Residues Ser-765, Ser-769, and Ser-824 each carry the phosphoserine modification. Residues 790–860 (IPGAEAPESS…GWFALSTHVS (71 aa)) form a disordered region. Over residues 808 to 824 (SGLNSRRSSGAASNSCS) the composition is skewed to low complexity.

As to quaternary structure, interacts with CEP120.

The protein localises to the cytoplasm. The protein resides in the cytoskeleton. It is found in the microtubule organizing center. It localises to the centrosome. Its subcellular location is the centriole. The protein localises to the spindle. In terms of biological role, regulator required for centriole duplication. for proper bipolar spindle formation and chromosome congression in mitosis. The sequence is that of Spindle and centriole-associated protein 1 (SPICE1) from Bos taurus (Bovine).